A 145-amino-acid chain; its full sequence is D-aminoacyl-tRNA deacylase (145 aa).

A Gly-cisPro motif, important for rejection of L-amino acids motif is present at residues 137-138; that stretch reads GP.

Belongs to the DTD family. As to quaternary structure, homodimer.

It localises to the cytoplasm. It catalyses the reaction glycyl-tRNA(Ala) + H2O = tRNA(Ala) + glycine + H(+). The catalysed reaction is a D-aminoacyl-tRNA + H2O = a tRNA + a D-alpha-amino acid + H(+). Functionally, an aminoacyl-tRNA editing enzyme that deacylates mischarged D-aminoacyl-tRNAs. Also deacylates mischarged glycyl-tRNA(Ala), protecting cells against glycine mischarging by AlaRS. Acts via tRNA-based rather than protein-based catalysis; rejects L-amino acids rather than detecting D-amino acids in the active site. By recycling D-aminoacyl-tRNA to D-amino acids and free tRNA molecules, this enzyme counteracts the toxicity associated with the formation of D-aminoacyl-tRNA entities in vivo and helps enforce protein L-homochirality. The protein is D-aminoacyl-tRNA deacylase of Francisella tularensis subsp. novicida (strain U112).